The following is a 511-amino-acid chain: GMP synthase [glutamine-hydrolyzing] (511 aa).

In terms of domain architecture, Glutamine amidotransferase type-1 spans 5–195; it reads DILVLDFGSQ…AKYACNCESV (191 aa). Residue cysteine 82 is the Nucleophile of the active site. Residues histidine 169 and glutamate 171 contribute to the active site. Residues 196–386 form the GMPS ATP-PPase domain; sequence WNMGSFAKTQ…LGLSKEVVYR (191 aa). 223-229 serves as a coordination point for ATP; it reads SGGVDSS.

As to quaternary structure, homodimer.

It carries out the reaction XMP + L-glutamine + ATP + H2O = GMP + L-glutamate + AMP + diphosphate + 2 H(+). It functions in the pathway purine metabolism; GMP biosynthesis; GMP from XMP (L-Gln route): step 1/1. In terms of biological role, catalyzes the synthesis of GMP from XMP. This chain is GMP synthase [glutamine-hydrolyzing], found in Campylobacter jejuni (strain RM1221).